The sequence spans 242 residues: Serine hydrolase cnsH (242 aa).

Residues serine 56, aspartate 138, and histidine 216 each act as charge relay system in the active site.

Belongs to the AB hydrolase 3 family.

The protein operates within alkaloid biosynthesis. In terms of biological role, serine hydrolase; part of the gene cluster that mediates the biosynthesis of communesins, a prominent class of indole alkaloids with great potential as pharmaceuticals. Communesins are biosynthesized by the coupling of tryptamine and aurantioclavine, two building blocks derived from L-tryptophan. The L-tryptophan decarboxylase cnsB converts L-tryptophan to tryptamine, whereas the tryptophan dimethylallyltransferase cnsF converts L-tryptophan to 4-dimethylallyl tryptophan which is further transformed to aurantioclavine by the aurantioclavine synthase cnsA, probably aided by the catalase cnsD. The cytochrome P450 monooxygenase cnsC catalyzes the heterodimeric coupling between the two different indole moieties, tryptamine and aurantioclavine, to construct vicinal quaternary stereocenters and yield the heptacyclic communesin scaffold. The O-methyltransferase cnsE then methylates the communesin scaffold to produce communesin K, the simplest characterized communesin that contains the heptacyclic core. The dioxygenase cnsJ converts communesin K into communesin I. Acylation to introduce the hexadienyl group at position N16 of communesin I by the acyltransferase cnsK leads to the production of communesin B. The hexadienyl group is produced by the highly reducing polyketide synthase cnsI, before being hydrolytically removed from cnsI by the serine hydrolase cnsH, converted into hexadienyl-CoA by the CoA ligase cnsG, and then transferred to communesin I by cnsK. Surprisingly, cnsK may also be a promiscuous acyltransferase that can tolerate a range of acyl groups, including acetyl-, propionyl-, and butyryl-CoA, which lead to communesins A, G and H respectively. The roles of the alpha-ketoglutarate-dependent dioxygenases cnsM and cnsP have still to be determined. The chain is Serine hydrolase cnsH from Penicillium expansum (Blue mold rot fungus).